Consider the following 169-residue polypeptide: Peptide deformylase (169 aa).

Positions 93 and 135 each coordinate Fe cation. The active site involves E136. Residue H139 coordinates Fe cation.

The protein belongs to the polypeptide deformylase family. The cofactor is Fe(2+).

It carries out the reaction N-terminal N-formyl-L-methionyl-[peptide] + H2O = N-terminal L-methionyl-[peptide] + formate. In terms of biological role, removes the formyl group from the N-terminal Met of newly synthesized proteins. Requires at least a dipeptide for an efficient rate of reaction. N-terminal L-methionine is a prerequisite for activity but the enzyme has broad specificity at other positions. This is Peptide deformylase from Aquifex aeolicus (strain VF5).